The chain runs to 329 residues: Vomeronasal type-1 receptor 42 (329 aa).

At 1-32 (MGDILFSSPQSMFSHTMNKNSILHTHSIIGKT) the chain is on the extracellular side. The helical transmembrane segment at 33-53 (FFSEIGIGISGNSFLLLVHIL) threads the bilayer. Residues 54–65 (KFIRGHRPRLTD) are Cytoplasmic-facing. A helical transmembrane segment spans residues 66–86 (LPIGLLSLIHLLMLLVAAFIA). The Extracellular portion of the chain corresponds to 87–109 (TDIFISRRGWDDIICKFLVYLYR). Cys101 and Cys188 form a disulfide bridge. The chain crosses the membrane as a helical span at residues 110-130 (VLRGFSLCTTSMLSILQAIIL). Topologically, residues 131–150 (SPRSSCLAKFKHISPHHISG) are cytoplasmic. Residues 151–171 (AILFLSVLYMLIGSQLLVSII) form a helical membrane-spanning segment. At 172-209 (ATPNLTMNDFIYVTQSCSILPLSYLMQSIYSTLLAIRE) the chain is on the extracellular side. Asn175 carries N-linked (GlcNAc...) asparagine glycosylation. The chain crosses the membrane as a helical span at residues 210 to 230 (FFLISLMVLSNWYMVALLSMH). Residues 231 to 254 (RKQTQHLHGTNLSPKKSPEQSATQ) are Cytoplasmic-facing. Residues 255–275 (TILMLISFFLLMTIYDTIVSC) form a helical membrane-spanning segment. Topologically, residues 276–285 (SRTMFLNDPT) are extracellular. The helical transmembrane segment at 286-306 (SYSIELFIMHIYATVSPFVFM) threads the bilayer. At 307 to 329 (STEKHIVNFLRSLGKRVINFNLH) the chain is on the cytoplasmic side.

Belongs to the G-protein coupled receptor 1 family.

It is found in the cell membrane. Putative pheromone receptor implicated in the regulation of social and reproductive behavior. The polypeptide is Vomeronasal type-1 receptor 42 (Vmn1r42) (Mus musculus (Mouse)).